We begin with the raw amino-acid sequence, 479 residues long: Inhibitory synaptic factor 2A (479 aa).

A Phosphoserine modification is found at S177. Disordered regions lie at residues 226–247 (GRAK…ALRR) and 315–338 (SPEC…PSPT). Residues 228–237 (AKQDRGRPNS) are compositionally biased toward basic and acidic residues. A compositionally biased stretch (polar residues) spans 318 to 337 (CSEQPSQTHTPPGLGNQPSP). A coiled-coil region spans residues 353-379 (TEVVDLKAQLQMMENLISSSQETIKVL). A compositionally biased stretch (polar residues) spans 449 to 461 (SPYSQETYSSTPK). Residues 449-472 (SPYSQETYSSTPKQKSKTESKKHG) form a disordered region.

It belongs to the INSYN2 family. As to quaternary structure, interacts with GPHN.

The protein localises to the postsynaptic density. In terms of biological role, component of the protein machinery at the inhibitory synapses, probably acting as a scaffold. Inhibitory synapses dampen neuronal activity through postsynaptic hyperpolarization. This synaptic inhibition is fundamental for the functioning of the central nervous system, shaping and orchestrating the flow of information through neuronal networks to generate a precise neural code. The chain is Inhibitory synaptic factor 2A from Homo sapiens (Human).